Here is a 140-residue protein sequence, read N- to C-terminus: Relaxin-3 (140 aa).

Positions 1 to 26 (MAKRPLLLLLLAVWVLAGELWLRTEA) are cleaved as a signal peptide. Cystine bridges form between Cys36-Cys127, Cys48-Cys140, and Cys126-Cys131. A propeptide spans 56–116 (SDMLAHEALG…RTPGALRGSR (61 aa)) (connecting peptide).

It belongs to the insulin family. In terms of assembly, heterodimer of a B chain and an A chain linked by two disulfide bonds.

Its subcellular location is the secreted. May play a role in neuropeptide signaling processes. Ligand for LGR7, RXFP3 and RXFP4. The sequence is that of Relaxin-3 (RLN3) from Sus scrofa (Pig).